Here is a 255-residue protein sequence, read N- to C-terminus: Homeobox protein Hox-D4 (255 aa).

The interval 31-127 (EQGADYYGGG…PKQPPSGTAL (97 aa)) is disordered. Over residues 94 to 107 (EPCPAPPAPPPAPL) the composition is skewed to pro residues. The Antp-type hexapeptide signature appears at 133 to 138 (VYPWMK). A DNA-binding region (homeobox) is located at residues 154-213 (PKRSRTAYTRQQVLELEKEFHFNRYLTRRRRIEIAHTLCLSERQIKIWFQNRRMKWKKDH). Residues 212–255 (DHKLPNTKGRSSSSSSSSSCSSSVAPSQHLQPMAKDHHTDLTTL) form a disordered region. Positions 222–234 (SSSSSSSSSCSSS) are enriched in low complexity. The span at 245–255 (AKDHHTDLTTL) shows a compositional bias: basic and acidic residues.

Belongs to the Antp homeobox family. Deformed subfamily. In terms of assembly, forms a DNA-binding heterodimer with transcription factor PBX1.

It is found in the nucleus. In terms of biological role, sequence-specific transcription factor which is part of a developmental regulatory system that provides cells with specific positional identities on the anterior-posterior axis. This chain is Homeobox protein Hox-D4 (HOXD4), found in Homo sapiens (Human).